A 592-amino-acid chain; its full sequence is Protein phosphatase EYA1 (592 aa).

Disordered stretches follow at residues 1–95 (MEMQ…RPYP) and 240–320 (MTSS…PDSD). Residues 8 to 26 (SPHSRLSGSSESPSGPKLG) are compositionally biased toward low complexity. Positions 28–63 (SHINSNSMTPNGTEVKTEPMSSSETASTTADGSLNN) are enriched in polar residues. Composition is skewed to low complexity over residues 64–75 (FSGSAIGSSSFS) and 241–253 (TSSN…PSTN). Polar residues predominate over residues 254–287 (ATYQLQEPPSGITSQAVTDPTAEYSTIHSPSTPI). Residues 288 to 303 (KDSDSDRLRRGSDGKS) show a composition bias toward basic and acidic residues. The active-site Nucleophile is the D328. D328, D330, and D556 together coordinate Mg(2+). The active-site Proton donor is D330.

Belongs to the HAD-like hydrolase superfamily. EYA family. In terms of assembly, probably interacts with SIX2, SIX4 and SIX5. Interacts with H2AX in response to DNA damage. Interacts with SIX3; promotes EYA1 translocation to the nucleus. Requires Mg(2+) as cofactor. In terms of processing, sumoylated with SUMO1. As to expression, in the embryo, highly expressed in kidney with lower levels in brain. Weakly expressed in lung. In the adult, highly expressed in heart and skeletal muscle. Weakly expressed in brain and liver. No expression in eye or kidney.

The protein localises to the cytoplasm. The protein resides in the nucleus. It catalyses the reaction O-phospho-L-tyrosyl-[protein] + H2O = L-tyrosyl-[protein] + phosphate. It carries out the reaction O-phospho-L-seryl-[protein] + H2O = L-seryl-[protein] + phosphate. The enzyme catalyses O-phospho-L-threonyl-[protein] + H2O = L-threonyl-[protein] + phosphate. Its function is as follows. Functions both as protein phosphatase and as transcriptional coactivator for SIX1, and probably also for SIX2, SIX4 and SIX5. Tyrosine phosphatase that dephosphorylates 'Tyr-142' of histone H2AX (H2AXY142ph) and promotes efficient DNA repair via the recruitment of DNA repair complexes containing MDC1. 'Tyr-142' phosphorylation of histone H2AX plays a central role in DNA repair and acts as a mark that distinguishes between apoptotic and repair responses to genotoxic stress. Its function as histone phosphatase may contribute to its function in transcription regulation during organogenesis. Also has phosphatase activity with proteins phosphorylated on Ser and Thr residues (in vitro). Required for normal embryonic development of the craniofacial and trunk skeleton, kidneys and ears. Together with SIX1, it plays an important role in hypaxial muscle development; in this it is functionally redundant with EYA2. This Homo sapiens (Human) protein is Protein phosphatase EYA1 (EYA1).